Here is a 214-residue protein sequence, read N- to C-terminus: Adenylate kinase (214 aa).

10 to 15 (GAGKGT) is an ATP binding site. The tract at residues 30–59 (STGDMLRAAIKAGTELGKQAKTLMDAGQLV) is NMP. AMP contacts are provided by residues Thr31, Arg36, 57-59 (QLV), 85-88 (GFPR), and Gln92. Residues 122–159 (GRRVHPASGRSYHVVYNPPKVEGKDDVTGEDLIIRADD) are LID. Residues Arg123 and 132–133 (SY) each bind ATP. 2 residues coordinate AMP: Arg156 and Arg167. Gln200 provides a ligand contact to ATP.

This sequence belongs to the adenylate kinase family. Monomer.

The protein localises to the cytoplasm. The catalysed reaction is AMP + ATP = 2 ADP. It functions in the pathway purine metabolism; AMP biosynthesis via salvage pathway; AMP from ADP: step 1/1. Functionally, catalyzes the reversible transfer of the terminal phosphate group between ATP and AMP. Plays an important role in cellular energy homeostasis and in adenine nucleotide metabolism. The polypeptide is Adenylate kinase (Actinobacillus succinogenes (strain ATCC 55618 / DSM 22257 / CCUG 43843 / 130Z)).